Reading from the N-terminus, the 374-residue chain is DNA integrity scanning protein DisA (374 aa).

One can recognise a DAC domain in the interval 20–158 (DGLMRASLSA…DGQRRVLEDS (139 aa)). Residues Gly-87, Leu-105, and 118–122 (TRHRT) each bind ATP.

This sequence belongs to the DisA family. In terms of assembly, homooctamer. Interacts with RadA. Requires Mg(2+) as cofactor.

The enzyme catalyses 2 ATP = 3',3'-c-di-AMP + 2 diphosphate. Its activity is regulated as follows. Diadenylate cyclase activity is inhibited by the interaction with RadA. Its function is as follows. Participates in a DNA-damage check-point that is active prior to asymmetric division when DNA is damaged. DisA forms globular foci that rapidly scan along the chromosomes during sporulation, searching for lesions. When a lesion is present, DisA pauses at the lesion site. This triggers a cellular response that culminates in a temporary block in sporulation initiation. In terms of biological role, also has diadenylate cyclase activity, catalyzing the condensation of 2 ATP molecules into cyclic di-AMP (c-di-AMP). c-di-AMP acts as a signaling molecule that couples DNA integrity with progression of sporulation. The rise in c-di-AMP level generated by DisA while scanning the chromosome, operates as a positive signal that advances sporulation; upon encountering a lesion, the DisA focus arrests at the damaged site and halts c-di-AMP synthesis. In Streptomyces coelicolor (strain ATCC BAA-471 / A3(2) / M145), this protein is DNA integrity scanning protein DisA.